The primary structure comprises 89 residues: Putative regulatory protein CYB_0055 (89 aa).

The protein belongs to the RemA family.

The polypeptide is Putative regulatory protein CYB_0055 (Synechococcus sp. (strain JA-2-3B'a(2-13)) (Cyanobacteria bacterium Yellowstone B-Prime)).